A 159-amino-acid polypeptide reads, in one-letter code: Small ribosomal subunit protein bS6 (159 aa).

Non-standard amino acids (selenocysteine) are located at selenocysteine 46 and selenocysteine 52.

It belongs to the bacterial ribosomal protein bS6 family.

Functionally, binds together with bS18 to 16S ribosomal RNA. In Desulfotalea psychrophila (strain LSv54 / DSM 12343), this protein is Small ribosomal subunit protein bS6.